Here is a 94-residue protein sequence, read N- to C-terminus: Translation initiation factor 1A 2 (94 aa).

Positions 6–80 (GRRNLRMPND…EKANVEWRYS (75 aa)) constitute an S1-like domain.

It belongs to the eIF-1A family.

Functionally, seems to be required for maximal rate of protein biosynthesis. Enhances ribosome dissociation into subunits and stabilizes the binding of the initiator Met-tRNA(I) to 40 S ribosomal subunits. In Halobacterium salinarum (strain ATCC 700922 / JCM 11081 / NRC-1) (Halobacterium halobium), this protein is Translation initiation factor 1A 2 (eIF1A2).